A 240-amino-acid chain; its full sequence is Uridylate kinase (240 aa).

15 to 18 (KLSG) lines the ATP pocket. An involved in allosteric activation by GTP region spans residues 23-28 (GSEGFG). UMP is bound at residue Gly-57. ATP-binding residues include Gly-58 and Arg-62. UMP-binding positions include Asp-77 and 138-145 (TGNPFFTT). The ATP site is built by Thr-165, Tyr-171, and Asp-174.

Belongs to the UMP kinase family. Homohexamer.

The protein resides in the cytoplasm. The enzyme catalyses UMP + ATP = UDP + ADP. It participates in pyrimidine metabolism; CTP biosynthesis via de novo pathway; UDP from UMP (UMPK route): step 1/1. Allosterically activated by GTP. Inhibited by UTP. In terms of biological role, catalyzes the reversible phosphorylation of UMP to UDP. The polypeptide is Uridylate kinase (Photobacterium profundum (strain SS9)).